The primary structure comprises 738 residues: Conserved oligomeric Golgi complex subunit 2 (738 aa).

Disordered stretches follow at residues 474–504 (IKKP…ETKP) and 668–687 (KQAR…GMSD). Residues 483 to 500 (KEPSITQGNTEDQGSGPS) show a composition bias toward polar residues.

It belongs to the COG2 family. Component of the conserved oligomeric Golgi complex which is composed of eight different subunits and is required for normal Golgi morphology and localization.

It localises to the golgi apparatus membrane. Its function is as follows. Required for normal Golgi morphology and function. The protein is Conserved oligomeric Golgi complex subunit 2 (COG2) of Homo sapiens (Human).